The chain runs to 611 residues: Mitogen-activated protein kinase 10 (611 aa).

A Protein kinase domain is found at 25 to 316; the sequence is YKIQEVIGKG…AEEALAHPYF (292 aa). ATP is bound by residues 31-39 and lysine 54; that span reads IGKGSYGVV. Aspartate 151 acts as the Proton acceptor in catalysis. Threonine 187 is subject to Phosphothreonine. Positions 187–189 match the TXY motif; it reads TDY. Tyrosine 189 is modified (phosphotyrosine). The tract at residues 394 to 481 is disordered; it reads ENGGNGPVIP…RVVGPVLPYE (88 aa). A compositionally biased stretch (basic and acidic residues) spans 426 to 439; it reads EQPRIGPSRDKPSD.

This sequence belongs to the protein kinase superfamily. CMGC Ser/Thr protein kinase family. MAP kinase subfamily. Post-translationally, dually phosphorylated on Thr-187 and Tyr-189, which activates the enzyme.

It catalyses the reaction L-seryl-[protein] + ATP = O-phospho-L-seryl-[protein] + ADP + H(+). It carries out the reaction L-threonyl-[protein] + ATP = O-phospho-L-threonyl-[protein] + ADP + H(+). Activated by threonine and tyrosine phosphorylation. In Oryza sativa subsp. japonica (Rice), this protein is Mitogen-activated protein kinase 10 (MPK10).